The sequence spans 145 residues: Small ribosomal subunit protein uS19 (145 aa).

The residue at position 2 (Ala2) is an N-acetylalanine. Lys108 participates in a covalent cross-link: Glycyl lysine isopeptide (Lys-Gly) (interchain with G-Cter in SUMO2).

Belongs to the universal ribosomal protein uS19 family. Component of the small ribosomal subunit.

Its subcellular location is the cytoplasm. Functionally, component of the small ribosomal subunit. The ribosome is a large ribonucleoprotein complex responsible for the synthesis of proteins in the cell. The protein is Small ribosomal subunit protein uS19 (RPS15) of Bos taurus (Bovine).